We begin with the raw amino-acid sequence, 556 residues long: Formate--tetrahydrofolate ligase (556 aa).

65–72 provides a ligand contact to ATP; the sequence is TPAGEGKT.

Belongs to the formate--tetrahydrofolate ligase family.

The catalysed reaction is (6S)-5,6,7,8-tetrahydrofolate + formate + ATP = (6R)-10-formyltetrahydrofolate + ADP + phosphate. The protein operates within one-carbon metabolism; tetrahydrofolate interconversion. The polypeptide is Formate--tetrahydrofolate ligase (Clostridium cylindrosporum).